We begin with the raw amino-acid sequence, 439 residues long: Hemagglutinin-esterase (439 aa).

Positions 1–22 (MGSTCIAMAPRTLLLLIGCQLV) are cleaved as a signal peptide. Residues 12-132 (TLLLLIGCQL…DNKRWMGNKA (121 aa)) form an esterase domain 1 region. Topologically, residues 23–407 (FGFNEPLNIV…PVCIYDPLPV (385 aa)) are virion surface. Ser-45 acts as the Nucleophile in catalysis. A disulfide bridge connects residues Cys-49 and Cys-70. Residue Asn-94 is glycosylated (N-linked (GlcNAc...) asparagine; by host). An intrachain disulfide couples Cys-118 to Cys-167. Residues 133-281 (RFYARVYEKM…GNYKAVSLEY (149 aa)) form a receptor binding region. Asn-196, Asn-246, Asn-309, and Asn-316 each carry an N-linked (GlcNAc...) asparagine; by host glycan. 2 cysteine pairs are disulfide-bonded: Cys-202/Cys-291 and Cys-210/Cys-264. Residues 282-395 (LLSLPSKAIC…QCPTAANIGY (114 aa)) form an esterase domain 2 region. Cys-322 and Cys-327 form a disulfide bridge. The N-linked (GlcNAc...) asparagine; by host glycan is linked to Asn-331. Active-site charge relay system residues include Asp-342 and His-345. 2 N-linked (GlcNAc...) asparagine; by host glycosylation sites follow: Asn-360 and Asn-374. An intrachain disulfide couples Cys-363 to Cys-387. A helical membrane pass occupies residues 408–428 (VLLGVLLGIAVLIIVFLILYF). Topologically, residues 429–439 (MTDSGVRLHEA) are intravirion.

The protein belongs to the influenza type C/coronaviruses hemagglutinin-esterase family. In terms of assembly, homodimer; disulfide-linked. Forms a complex with the M protein in the pre-Golgi. Associates then with S-M complex to form a ternary complex S-M-HE. Post-translationally, N-glycosylated in the host RER.

The protein localises to the virion membrane. It is found in the host cell membrane. The catalysed reaction is N-acetyl-9-O-acetylneuraminate + H2O = N-acetylneuraminate + acetate + H(+). It catalyses the reaction N-acetyl-4-O-acetylneuraminate + H2O = N-acetylneuraminate + acetate + H(+). Structural protein that makes short spikes at the surface of the virus. Contains receptor binding and receptor-destroying activities. Mediates de-O-acetylation of N-acetyl-4-O-acetylneuraminic acid, which is probably the receptor determinant recognized by the virus on the surface of erythrocytes and susceptible cells. This receptor-destroying activity is important for virus release as it probably helps preventing self-aggregation and ensures the efficient spread of the progeny virus from cell to cell. May serve as a secondary viral attachment protein for initiating infection, the spike protein being the major one. May become a target for both the humoral and the cellular branches of the immune system. The chain is Hemagglutinin-esterase from Murine coronavirus (strain JHM) (MHV-JHM).